The chain runs to 280 residues: Large ribosomal subunit protein uL2 (280 aa).

Disordered stretches follow at residues 1-20, 29-58, and 225-280; these read MAIRKYKPTTPGRRASSVSM, PEKSLLRPLSKTGGRNSHGHITTRHRGGGH, and VMNP…NKKR. The span at 45-58 shows a compositional bias: basic residues; sequence SHGHITTRHRGGGH. Basic and acidic residues predominate over residues 253-269; it reads KEGRTRRPKRYSDDMIV. Positions 270–280 are enriched in basic residues; it reads RRRRANKNKKR.

It belongs to the universal ribosomal protein uL2 family. Part of the 50S ribosomal subunit. Forms a bridge to the 30S subunit in the 70S ribosome.

Its function is as follows. One of the primary rRNA binding proteins. Required for association of the 30S and 50S subunits to form the 70S ribosome, for tRNA binding and peptide bond formation. It has been suggested to have peptidyltransferase activity; this is somewhat controversial. Makes several contacts with the 16S rRNA in the 70S ribosome. This Corynebacterium efficiens (strain DSM 44549 / YS-314 / AJ 12310 / JCM 11189 / NBRC 100395) protein is Large ribosomal subunit protein uL2.